The sequence spans 396 residues: 1-deoxy-D-xylulose 5-phosphate reductoisomerase (396 aa).

NADPH is bound by residues T10, G11, S12, I13, G36, K37, N38, and N124. Residue K125 participates in 1-deoxy-D-xylulose 5-phosphate binding. E126 serves as a coordination point for NADPH. A Mn(2+)-binding site is contributed by D150. Residues S151, E152, S186, and H209 each coordinate 1-deoxy-D-xylulose 5-phosphate. A Mn(2+)-binding site is contributed by E152. An NADPH-binding site is contributed by G215. 1-deoxy-D-xylulose 5-phosphate-binding residues include S222, N227, K228, and E231. E231 lines the Mn(2+) pocket.

It belongs to the DXR family. Requires Mg(2+) as cofactor. Mn(2+) serves as cofactor.

The enzyme catalyses 2-C-methyl-D-erythritol 4-phosphate + NADP(+) = 1-deoxy-D-xylulose 5-phosphate + NADPH + H(+). Its pathway is isoprenoid biosynthesis; isopentenyl diphosphate biosynthesis via DXP pathway; isopentenyl diphosphate from 1-deoxy-D-xylulose 5-phosphate: step 1/6. Its function is as follows. Catalyzes the NADPH-dependent rearrangement and reduction of 1-deoxy-D-xylulose-5-phosphate (DXP) to 2-C-methyl-D-erythritol 4-phosphate (MEP). This chain is 1-deoxy-D-xylulose 5-phosphate reductoisomerase, found in Glaesserella parasuis serovar 5 (strain SH0165) (Haemophilus parasuis).